The following is a 122-amino-acid chain: Small ribosomal subunit protein uS13 (122 aa).

The disordered stretch occupies residues 92-122 (HRMGLPVRGQRTKTNARTRKGPSKPVSGKKK). Residues 101–122 (QRTKTNARTRKGPSKPVSGKKK) show a composition bias toward basic residues.

The protein belongs to the universal ribosomal protein uS13 family. In terms of assembly, part of the 30S ribosomal subunit. Forms a loose heterodimer with protein S19. Forms two bridges to the 50S subunit in the 70S ribosome.

Its function is as follows. Located at the top of the head of the 30S subunit, it contacts several helices of the 16S rRNA. In the 70S ribosome it contacts the 23S rRNA (bridge B1a) and protein L5 of the 50S subunit (bridge B1b), connecting the 2 subunits; these bridges are implicated in subunit movement. Contacts the tRNAs in the A and P-sites. This chain is Small ribosomal subunit protein uS13, found in Ruminiclostridium cellulolyticum (strain ATCC 35319 / DSM 5812 / JCM 6584 / H10) (Clostridium cellulolyticum).